A 109-amino-acid chain; its full sequence is Large ribosomal subunit protein uL22 (109 aa).

The protein belongs to the universal ribosomal protein uL22 family. In terms of assembly, part of the 50S ribosomal subunit.

Its function is as follows. This protein binds specifically to 23S rRNA; its binding is stimulated by other ribosomal proteins, e.g. L4, L17, and L20. It is important during the early stages of 50S assembly. It makes multiple contacts with different domains of the 23S rRNA in the assembled 50S subunit and ribosome. In terms of biological role, the globular domain of the protein is located near the polypeptide exit tunnel on the outside of the subunit, while an extended beta-hairpin is found that lines the wall of the exit tunnel in the center of the 70S ribosome. The polypeptide is Large ribosomal subunit protein uL22 (Paraburkholderia xenovorans (strain LB400)).